The sequence spans 327 residues: Malate dehydrogenase (327 aa).

12 to 18 (GAAGQIG) provides a ligand contact to NAD(+). 2 residues coordinate substrate: arginine 93 and arginine 99. NAD(+)-binding positions include asparagine 106, glutamine 113, and 130 to 132 (VGN). Substrate-binding residues include asparagine 132 and arginine 163. Histidine 188 functions as the Proton acceptor in the catalytic mechanism.

This sequence belongs to the LDH/MDH superfamily. MDH type 2 family.

The catalysed reaction is (S)-malate + NAD(+) = oxaloacetate + NADH + H(+). Catalyzes the reversible oxidation of malate to oxaloacetate. The chain is Malate dehydrogenase from Cupriavidus metallidurans (strain ATCC 43123 / DSM 2839 / NBRC 102507 / CH34) (Ralstonia metallidurans).